The following is a 395-amino-acid chain: Major outer membrane protein P.IA (395 aa).

The signal sequence occupies residues 1 to 19 (MRKKLTALVLSALPLAAVA).

Belongs to the Gram-negative porin family. As to quaternary structure, homotrimer.

It localises to the cell outer membrane. Functionally, serves as a slightly cation selective porin. Major antigen on the gonococcal cell surface and it may have pathogenic properties in addition to its porin activity. This chain is Major outer membrane protein P.IA (porA), found in Neisseria meningitidis serogroup A / serotype 4A (strain DSM 15465 / Z2491).